Here is a 156-residue protein sequence, read N- to C-terminus: Small ribosomal subunit protein uS7 (156 aa).

This sequence belongs to the universal ribosomal protein uS7 family. Part of the 30S ribosomal subunit. Contacts proteins S9 and S11.

One of the primary rRNA binding proteins, it binds directly to 16S rRNA where it nucleates assembly of the head domain of the 30S subunit. Is located at the subunit interface close to the decoding center, probably blocks exit of the E-site tRNA. This chain is Small ribosomal subunit protein uS7, found in Dictyoglomus thermophilum (strain ATCC 35947 / DSM 3960 / H-6-12).